A 122-amino-acid chain; its full sequence is Flagellar protein FliT (122 aa).

The required for homodimerization stretch occupies residues 1-50 (MERQQQLLAAYQQIHSLSSQMIALAQTERWEDLVELELAYVTAVESTAAF). The tract at residues 60–98 (LQELLRNKLQQILDNETELKRLLQQRMDQLKELIGQSTR) is fliD binding.

The protein belongs to the FliT family. Homodimer. Interacts with FliD and FlhC.

It localises to the cytoplasm. The protein resides in the cytosol. Its function is as follows. Dual-function protein that regulates the transcription of class 2 flagellar operons and that also acts as an export chaperone for the filament-capping protein FliD. As a transcriptional regulator, acts as an anti-FlhDC factor; it directly binds FlhC, thus inhibiting the binding of the FlhC/FlhD complex to class 2 promoters, resulting in decreased expression of class 2 flagellar operons. As a chaperone, effects FliD transition to the membrane by preventing its premature polymerization, and by directing it to the export apparatus. The polypeptide is Flagellar protein FliT (Serratia proteamaculans (strain 568)).